Here is a 152-residue protein sequence, read N- to C-terminus: MSTINSDTSEAMPHISVNAQYIKDLSLENPSAPSSLAALDQRPQIDLSLDINITNLSDENFYEVELNIEAIARNEKYKLFQIELKYAGVFNLINIDSEQHPILLSVHCPAMIFPFARKIIASCTQDAGFQPLMIDPIDFGALYHKKMSEHQN.

This sequence belongs to the SecB family. As to quaternary structure, homotetramer, a dimer of dimers. One homotetramer interacts with 1 SecA dimer.

It is found in the cytoplasm. In terms of biological role, one of the proteins required for the normal export of preproteins out of the cell cytoplasm. It is a molecular chaperone that binds to a subset of precursor proteins, maintaining them in a translocation-competent state. It also specifically binds to its receptor SecA. This is Protein-export protein SecB from Rickettsia typhi (strain ATCC VR-144 / Wilmington).